Consider the following 185-residue polypeptide: TATA-box-binding protein 2 (185 aa).

2 tandem repeats follow at residues 7-84 (IENI…ANEL) and 100-178 (VQNV…KTQL).

The protein belongs to the TBP family.

Functionally, general factor that plays a role in the activation of archaeal genes transcribed by RNA polymerase. Binds specifically to the TATA box promoter element which lies close to the position of transcription initiation. In Methanosarcina acetivorans (strain ATCC 35395 / DSM 2834 / JCM 12185 / C2A), this protein is TATA-box-binding protein 2.